Reading from the N-terminus, the 336-residue chain is Phenylalanine--tRNA ligase alpha subunit (336 aa).

E251 lines the Mg(2+) pocket.

Belongs to the class-II aminoacyl-tRNA synthetase family. Phe-tRNA synthetase alpha subunit type 1 subfamily. In terms of assembly, tetramer of two alpha and two beta subunits. The cofactor is Mg(2+).

It is found in the cytoplasm. It carries out the reaction tRNA(Phe) + L-phenylalanine + ATP = L-phenylalanyl-tRNA(Phe) + AMP + diphosphate + H(+). The polypeptide is Phenylalanine--tRNA ligase alpha subunit (Syntrophobacter fumaroxidans (strain DSM 10017 / MPOB)).